The sequence spans 620 residues: Glutathione-regulated potassium-efflux system protein KefC (620 aa).

The next 12 membrane-spanning stretches (helical) occupy residues 4–24 (HTLLQALIYLGSAALIVPIAV), 26–46 (LGLGSVLGYLIAGCIIGPWGL), 54–74 (SILHFAEIGVVLMLFVIGLEL), 90–110 (GALQMVVCGGLIGLFCMFLGL), 114–134 (VAELIGMTLALSSTAIAMQAM), 149–169 (FAVLLFQDIAAIPLVAMIPLL), 178–198 (LGAFALSALKVAGALALVVLL), 218–238 (VFSAVALFLVFGFGLLLEEVG), 270–290 (GLLLGLFFIGVGMSIDFGTLV), 294–314 (LRILLLLAGFLTIKIVMLWLV), 327–347 (WFAVLLGQGSEFAFVVFGAAQ), and 359–379 (ALTLAVALSMAATPIFLVLLT). The RCK N-terminal domain maps to 399–518 (QPRVIVAGFG…AGVAMPERET (120 aa)). The tract at residues 599-620 (QGTAEGKHSGEAADEPEVKPSI) is disordered.

This sequence belongs to the monovalent cation:proton antiporter 2 (CPA2) transporter (TC 2.A.37) family. KefC subfamily. Homodimer. Interacts with the regulatory subunit KefF.

It is found in the cell inner membrane. In terms of biological role, pore-forming subunit of a potassium efflux system that confers protection against electrophiles. Catalyzes K(+)/H(+) antiport. This chain is Glutathione-regulated potassium-efflux system protein KefC, found in Salmonella schwarzengrund (strain CVM19633).